Consider the following 513-residue polypeptide: ATP synthase subunit alpha (513 aa).

169-176 is a binding site for ATP; it reads GDRQTGKT.

It belongs to the ATPase alpha/beta chains family. F-type ATPases have 2 components, CF(1) - the catalytic core - and CF(0) - the membrane proton channel. CF(1) has five subunits: alpha(3), beta(3), gamma(1), delta(1), epsilon(1). CF(0) has three main subunits: a(1), b(2) and c(9-12). The alpha and beta chains form an alternating ring which encloses part of the gamma chain. CF(1) is attached to CF(0) by a central stalk formed by the gamma and epsilon chains, while a peripheral stalk is formed by the delta and b chains.

The protein resides in the cell inner membrane. It catalyses the reaction ATP + H2O + 4 H(+)(in) = ADP + phosphate + 5 H(+)(out). In terms of biological role, produces ATP from ADP in the presence of a proton gradient across the membrane. The alpha chain is a regulatory subunit. This Dichelobacter nodosus (strain VCS1703A) protein is ATP synthase subunit alpha.